Consider the following 209-residue polypeptide: Orotate phosphoribosyltransferase (209 aa).

Residues Arg96, Lys100, His102, and 122–130 (EDLISTGGS) each bind 5-phospho-alpha-D-ribose 1-diphosphate. An orotate-binding site is contributed by Ser126.

This sequence belongs to the purine/pyrimidine phosphoribosyltransferase family. PyrE subfamily. As to quaternary structure, homodimer. Mg(2+) is required as a cofactor.

It catalyses the reaction orotidine 5'-phosphate + diphosphate = orotate + 5-phospho-alpha-D-ribose 1-diphosphate. It participates in pyrimidine metabolism; UMP biosynthesis via de novo pathway; UMP from orotate: step 1/2. Functionally, catalyzes the transfer of a ribosyl phosphate group from 5-phosphoribose 1-diphosphate to orotate, leading to the formation of orotidine monophosphate (OMP). In Lactococcus lactis subsp. cremoris (strain SK11), this protein is Orotate phosphoribosyltransferase.